A 368-amino-acid chain; its full sequence is Putative F-box/kelch-repeat protein At5g02995 (368 aa).

Positions 35 to 84 (SLYWNDPTEDCVWNCLARISRFHYPTLSLVSKGFRSLIASPELEATRSFI) constitute an F-box domain. Kelch repeat units lie at residues 140-186 (DIYI…IVDK) and 187-233 (KIYV…VSGG).

This is Putative F-box/kelch-repeat protein At5g02995 from Arabidopsis thaliana (Mouse-ear cress).